Reading from the N-terminus, the 356-residue chain is Histidinol-phosphate aminotransferase (356 aa).

An N6-(pyridoxal phosphate)lysine modification is found at Lys211.

It belongs to the class-II pyridoxal-phosphate-dependent aminotransferase family. Histidinol-phosphate aminotransferase subfamily. As to quaternary structure, homodimer. Pyridoxal 5'-phosphate is required as a cofactor.

It carries out the reaction L-histidinol phosphate + 2-oxoglutarate = 3-(imidazol-4-yl)-2-oxopropyl phosphate + L-glutamate. Its pathway is amino-acid biosynthesis; L-histidine biosynthesis; L-histidine from 5-phospho-alpha-D-ribose 1-diphosphate: step 7/9. This Aeromonas hydrophila subsp. hydrophila (strain ATCC 7966 / DSM 30187 / BCRC 13018 / CCUG 14551 / JCM 1027 / KCTC 2358 / NCIMB 9240 / NCTC 8049) protein is Histidinol-phosphate aminotransferase.